The following is a 197-amino-acid chain: HTH-type transcriptional regulator BetI (197 aa).

In terms of domain architecture, HTH tetR-type spans 8 to 68 (PIRRSQLIHA…ATMRHLLSAL (61 aa)). The H-T-H motif DNA-binding region spans 31 to 50 (SIALIARLAGVSNGIISHYF).

It functions in the pathway amine and polyamine biosynthesis; betaine biosynthesis via choline pathway [regulation]. Functionally, repressor involved in the biosynthesis of the osmoprotectant glycine betaine. It represses transcription of the choline transporter BetT and the genes of BetAB involved in the synthesis of glycine betaine. In Pseudomonas aeruginosa (strain LESB58), this protein is HTH-type transcriptional regulator BetI.